The sequence spans 734 residues: Photosystem I P700 chlorophyll a apoprotein A2 (734 aa).

Transmembrane regions (helical) follow at residues 46-69 (IFAS…FHVA), 135-158 (LYTG…LHLQ), 175-199 (LNHH…HVAI), 273-291 (MAHH…GHMY), 330-353 (IHFQ…QHMY), 369-395 (AALY…IFFI), 417-439 (AIIS…LYVH), and 517-535 (FLVH…LILV). Residues Cys559 and Cys568 each contribute to the [4Fe-4S] cluster site. The next 2 membrane-spanning stretches (helical) occupy residues 575 to 596 (AFYL…YWHW) and 643 to 665 (LSVW…MFLI). Residues His654, Met662, and Tyr670 each coordinate chlorophyll a. Trp671 is a phylloquinone binding site. Residues 707-727 (LVGLAHFSVGYIFTYAAFLIA) form a helical membrane-spanning segment.

It belongs to the PsaA/PsaB family. In terms of assembly, the PsaA/B heterodimer binds the P700 chlorophyll special pair and subsequent electron acceptors. PSI consists of a core antenna complex that captures photons, and an electron transfer chain that converts photonic excitation into a charge separation. The eukaryotic PSI reaction center is composed of at least 11 subunits. Requires P700 is a chlorophyll a/chlorophyll a' dimer, A0 is one or more chlorophyll a, A1 is one or both phylloquinones and FX is a shared 4Fe-4S iron-sulfur center. as cofactor.

The protein localises to the plastid. It localises to the chloroplast thylakoid membrane. It catalyses the reaction reduced [plastocyanin] + hnu + oxidized [2Fe-2S]-[ferredoxin] = oxidized [plastocyanin] + reduced [2Fe-2S]-[ferredoxin]. In terms of biological role, psaA and PsaB bind P700, the primary electron donor of photosystem I (PSI), as well as the electron acceptors A0, A1 and FX. PSI is a plastocyanin-ferredoxin oxidoreductase, converting photonic excitation into a charge separation, which transfers an electron from the donor P700 chlorophyll pair to the spectroscopically characterized acceptors A0, A1, FX, FA and FB in turn. Oxidized P700 is reduced on the lumenal side of the thylakoid membrane by plastocyanin. The chain is Photosystem I P700 chlorophyll a apoprotein A2 from Lobularia maritima (Sweet alyssum).